Reading from the N-terminus, the 993-residue chain is MLLFKFNFTTAFLFTILAFAQARSHSSSSSSTSKSSASHHSSINSTSATSVYDFSSLTTPIVPTNGVAQEPTLYESSRGLSCPGYQARNISEYSYGVLAILELAGDACYAYGTDYPYLLLNVSYDTEERVHISISDLNQTQFQLSNRRDVWDAPLFYRSSNFSGNLQYNFSFNTDPFEFWITRIADDQVLFDTRGNPLIFEDQYIELTTNMVEDYNVYGLSGSQQSFRLGNNLTKTFWATGYSDSPEANMYGSHPFYMEQRYIPIGTTNTYTSASHGVLMLSSNGMEVLLRSTYIKYRMIGGIIDLFVYSGSTVSPKYTIQQYVQSIGTPTMQPYWSLGFQMSRWGYKTLSDLINMRSYLNASNIPTEGFWNDIDYMSEFRTFTVNSTAFPPNQTLDFFRSLDESHQHYVPVLDPAIYAANPNKSADRTYYPYYSGFEDNIFIKNPNGSAYVGMAWPGFVVYPDFTNPAVLQYWKQGILNLSTAFGSNYSYDLPFSGLCLDMNEPTSFCIGSCGSDLLKLNPVHPPFSLPGDVDNKVYSYPEDFNATNTTEYKSVSRASQSQYKATATSEKSHETPSSESLINGKPEFSINYPPYALDTDTETHDLAQFGVSPNATMHGNTLRYNLFNTYGYSESKISFEALNSIQPNIRPFLLSRSTFVGSGRYAAHWLGDNKSQWSDMVSSISSILTFNLLGIPMVGADVCGYNGNTDEELCARWMALGAFLPFYRNHNSLGSIPQEPFRWASVAEASRSAIEIRYSLLPYWYTLMHTASVDGTPMVRPLFFEFPKQISLASVDKQFMIGTALLISPALEPNTTYIQGIIPGDNDTIWYDWYNHSVINHDYDENITMSAPLGYVNIAVRGGNIIPLQQPGYTTYESRNNPYSLLIAMDNNGFASGSLYIDDGISMQTNSSLSVKLNSNSNTITCVVSGTMVSSPSLANITILGLSNPPNTILFNGQQLSDYQYSDQTLSLTNLLDLTVDGAFSKNWTVTWS.

The first 24 residues, 1–24 (MLLFKFNFTTAFLFTILAFAQARS), serve as a signal peptide directing secretion. 15 N-linked (GlcNAc...) asparagine glycosylation sites follow: Asn-7, Asn-44, Asn-89, Asn-121, Asn-138, Asn-161, Asn-169, Asn-232, Asn-361, Asn-386, Asn-393, Asn-423, Asn-447, Asn-480, and Asn-488. The active site involves Glu-504. Residues Asn-545, Asn-548, and Asn-614 are each glycosylated (N-linked (GlcNAc...) asparagine). Residue Asp-672 is the Proton donor of the active site. N-linked (GlcNAc...) asparagine glycans are attached at residues Asn-673, Asn-814, Asn-826, Asn-835, Asn-846, Asn-910, Asn-940, and Asn-987.

It belongs to the glycosyl hydrolase 31 family.

This is an uncharacterized protein from Schizosaccharomyces pombe (strain 972 / ATCC 24843) (Fission yeast).